The following is a 451-amino-acid chain: UDP-N-acetylmuramoylalanine--D-glutamate ligase (451 aa).

An ATP-binding site is contributed by 119-125; the sequence is GSNGKTT.

This sequence belongs to the MurCDEF family.

Its subcellular location is the cytoplasm. It catalyses the reaction UDP-N-acetyl-alpha-D-muramoyl-L-alanine + D-glutamate + ATP = UDP-N-acetyl-alpha-D-muramoyl-L-alanyl-D-glutamate + ADP + phosphate + H(+). It functions in the pathway cell wall biogenesis; peptidoglycan biosynthesis. Cell wall formation. Catalyzes the addition of glutamate to the nucleotide precursor UDP-N-acetylmuramoyl-L-alanine (UMA). This is UDP-N-acetylmuramoylalanine--D-glutamate ligase from Geobacillus sp. (strain WCH70).